We begin with the raw amino-acid sequence, 239 residues long: Ribonuclease 3 (239 aa).

An RNase III domain is found at 11-133 (HAAIQKKLGY…MFAAVSFDAD (123 aa)). Residue E46 coordinates Mg(2+). D50 is a catalytic residue. Mg(2+)-binding residues include D119 and E122. Residues 160–230 (DGKTALQEAL…AKEALKWLEE (71 aa)) enclose the DRBM domain.

Belongs to the ribonuclease III family. As to quaternary structure, homodimer. It depends on Mg(2+) as a cofactor.

The protein localises to the cytoplasm. It carries out the reaction Endonucleolytic cleavage to 5'-phosphomonoester.. Digests double-stranded RNA. Involved in the processing of primary rRNA transcript to yield the immediate precursors to the large and small rRNAs (23S and 16S). Also processes some mRNAs, and tRNAs when they are encoded in the rRNA operon. Its function is as follows. CRISPR (clustered regularly interspaced short palindromic repeat) is an adaptive immune system that provides protection against mobile genetic elements (viruses, transposable elements and conjugative plasmids). CRISPR clusters contain spacers, sequences complementary to antecedent mobile elements, and target invading nucleic acids. CRISPR clusters are transcribed and processed into CRISPR RNA (crRNA). In this organism endogenous ribonuclease 3 and Cas9 are required for correct coprocessing of pre-crRNA and the trans-encoded small RNA (tracrRNA). Cas9, crRNA and tracRNA are required for cleavage of invading DNA. Involved in 3'-end processing but not 5'-end processing of crRNA and tracrRNA. The sequence is that of Ribonuclease 3 from Neisseria meningitidis serogroup C (strain 8013).